Reading from the N-terminus, the 390-residue chain is Alpha-2B adrenergic receptor (390 aa).

A helical membrane pass occupies residues 1–25; the sequence is AIATVITFLILFTIFGNSLVILAVL. The Cytoplasmic portion of the chain corresponds to 26 to 36; sequence TSRSLRAPQNL. A helical membrane pass occupies residues 37–62; the sequence is FLVSLAAADIMVATLIIPFSLANELL. At 63 to 72 the chain is on the extracellular side; that stretch reads GYWYFRRTWC. Cys-72 and Cys-151 are disulfide-bonded. A helical transmembrane segment spans residues 73–95; the sequence is EVYLALDVLFCTSSIVHLCAISL. The Cytoplasmic segment spans residues 96–117; sequence DRYWAVSRALEYNSKRTPRRIK. Residues 118–140 traverse the membrane as a helical segment; it reads CIILTVWLIAAAISLPPLIYKGD. The Extracellular portion of the chain corresponds to 141-156; it reads QGPQPRGRPQCKLNQE. Residues 157–180 traverse the membrane as a helical segment; it reads AWYILSSSIGSFFAPCLIMILVYL. Residues 181–354 are Cytoplasmic-facing; it reads RIYLIAKRSH…LTREKRFTFV (174 aa). 2 disordered regions span residues 191-218 and 233-311; these read RRGP…PSAL and EANG…PLQQ. Residues 280 to 292 show a composition bias toward acidic residues; the sequence is LEEEADKEEEEEC. A helical transmembrane segment spans residues 355-378; sequence LAVVIGVFVLCWFPFFFSYSLGAI. Topologically, residues 379 to 390 are extracellular; sequence CPQHCKVPHGLF.

It belongs to the G-protein coupled receptor 1 family. Adrenergic receptor subfamily. ADRA2B sub-subfamily. Interacts with RAB26. Interacts with PPP1R9B. Interacts with GGA1, GGA2 and GGA3.

It is found in the cell membrane. Its function is as follows. Alpha-2 adrenergic receptors mediate the catecholamine-induced inhibition of adenylate cyclase through the action of G proteins. This is Alpha-2B adrenergic receptor (ADRA2B) from Dugong dugon (Dugong).